Here is a 361-residue protein sequence, read N- to C-terminus: Queuine tRNA-ribosyltransferase (361 aa).

The active-site Proton acceptor is Asp-92. Substrate contacts are provided by residues 92-96, Asp-146, Gln-189, and Gly-216; that span reads DSGGF. The tract at residues 247 to 253 is RNA binding; sequence GVGKPAD. Asp-266 serves as the catalytic Nucleophile. The segment at 271-275 is RNA binding; important for wobble base 34 recognition; sequence TRSGR. Residues Cys-304, Cys-306, Cys-309, and His-335 each contribute to the Zn(2+) site.

Belongs to the queuine tRNA-ribosyltransferase family. Homodimer. Within each dimer, one monomer is responsible for RNA recognition and catalysis, while the other monomer binds to the replacement base PreQ1. Zn(2+) is required as a cofactor.

It catalyses the reaction 7-aminomethyl-7-carbaguanine + guanosine(34) in tRNA = 7-aminomethyl-7-carbaguanosine(34) in tRNA + guanine. The protein operates within tRNA modification; tRNA-queuosine biosynthesis. Its function is as follows. Catalyzes the base-exchange of a guanine (G) residue with the queuine precursor 7-aminomethyl-7-deazaguanine (PreQ1) at position 34 (anticodon wobble position) in tRNAs with GU(N) anticodons (tRNA-Asp, -Asn, -His and -Tyr). Catalysis occurs through a double-displacement mechanism. The nucleophile active site attacks the C1' of nucleotide 34 to detach the guanine base from the RNA, forming a covalent enzyme-RNA intermediate. The proton acceptor active site deprotonates the incoming PreQ1, allowing a nucleophilic attack on the C1' of the ribose to form the product. After dissociation, two additional enzymatic reactions on the tRNA convert PreQ1 to queuine (Q), resulting in the hypermodified nucleoside queuosine (7-(((4,5-cis-dihydroxy-2-cyclopenten-1-yl)amino)methyl)-7-deazaguanosine). In Rickettsia peacockii (strain Rustic), this protein is Queuine tRNA-ribosyltransferase.